A 175-amino-acid chain; its full sequence is Regenerating islet-derived protein 3-beta (175 aa).

The N-terminal stretch at 1 to 26 (MLHRLAFPVMSWMLLSCLMLLSQVQG) is a signal peptide. Residues 27–37 (EDSPKKIPSAR) constitute a propeptide that is removed on maturation. 3 cysteine pairs are disulfide-bonded: cysteine 40–cysteine 51, cysteine 68–cysteine 171, and cysteine 146–cysteine 163. In terms of domain architecture, C-type lectin spans 47–172 (YGSYCYALFQ…CEVKLPYVCK (126 aa)). Position 107 (histidine 107) interacts with Zn(2+). The short motif at 114 to 116 (EPN) is the EPN element. Residue glutamate 121 participates in Zn(2+) binding.

In terms of assembly, forms a hexameric membrane-permeabilizing oligomeric pore on membrane phospholipids. The hexamer is formed by three dimers related by helical symmetry. Forms filaments, filamentation traps pore complexes and limits damage to host cells. Interacts with EXTL3. In terms of processing, proteolytic processing by trypsin removes an inhibitory N-terminal propeptide and is essential for peptidoglycan binding and antibacterial activity. As to expression, constitutively expressed in intestine.

The protein resides in the secreted. With respect to regulation, lipopolysaccharide inhibits pore-forming activity, explaining why is bactericidal for Gram-positive but not Gram-negative bacteria. Functionally, bactericidal C-type lectin which acts against several intestinal Gram-positive bacteria and Gram-negative bacteria. Lacks antibacterial activity against S.typhimurium. May play a role in protection against infection with S.enteritidis by inhibiting its translocation from the gut lumen into intestinal tissues and further extraintestinal tissues. Its function is as follows. Acts as a hormone in response to different stimuli. Secreted by different cell types to activate its receptor EXTL3 and induce cell specific signaling pathways. In pancreas, is able stimulate cell proliferation. The chain is Regenerating islet-derived protein 3-beta from Rattus norvegicus (Rat).